Here is a 126-residue protein sequence, read N- to C-terminus: Adenosine 5'-monophosphoramidase HINT1 (126 aa).

Residue alanine 2 is modified to N-acetylalanine. An HIT domain is found at 18–126 (IFGKIIRKEI…GGRQMNWPPG (109 aa)). N6-acetyllysine occurs at positions 21 and 30. 43-44 (DI) is a binding site for AMP. A phosphoserine mark is found at serine 45 and serine 72. AMP contacts are provided by residues asparagine 99, 105–107 (GQS), and 112–114 (HLH). A Histidine triad motif motif is present at residues 110–114 (HVHLH). The Tele-AMP-histidine intermediate role is filled by histidine 112.

Belongs to the HINT family. As to quaternary structure, homodimer. Interacts with CDK7. Interacts with RUVBL1 and RUVBL2 and is associated with the LEF1/TCF1-CTNNB1 complex and with a KAT5 histone acetyltransferase complex. Identified in a complex with MITF and CTNNB1. Interacts with CDC34 and RBX1, and is part of a SCF (SKP2-CUL1-F-box protein) E3 ubiquitin-protein ligase complex. Interacts with SUMO1, SUMO2 and RGS17. Interacts with the Ten-1 ICD form of TENM1. Interacts with CALM1; interaction increases in the presence of calcium ions. As to expression, widely expressed.

Its subcellular location is the cytoplasm. The protein resides in the nucleus. The catalysed reaction is adenosine 5'-phosphoramidate + H2O = AMP + NH4(+). Functionally, exhibits adenosine 5'-monophosphoramidase activity, hydrolyzing purine nucleotide phosphoramidates with a single phosphate group such as adenosine 5'monophosphoramidate (AMP-NH2) to yield AMP and NH2. Hydrolyzes adenosine 5'monophosphomorpholidate (AMP-morpholidate) and guanosine 5'monophosphomorpholidate (GMP-morpholidate). Hydrolyzes lysyl-AMP (AMP-N-epsilon-(N-alpha-acetyl lysine methyl ester)) generated by lysine tRNA ligase. Hydrolyzes Met-AMP, His-AMP, Asp-AMP, lysyl-GMP (GMP-N-epsilon-(N-alpha-acetyl lysine methyl ester)) and AMP-N-alanine methyl ester. Can also convert adenosine 5'-O-phosphorothioate and guanosine 5'-O-phosphorothioate to the corresponding nucleoside 5'-O-phosphates with concomitant release of hydrogen sulfide. In addition, functions as a scaffolding protein that modulates transcriptional activation by the LEF1/TCF1-CTNNB1 complex and by the complex formed with MITF and CTNNB1. Modulates p53/TP53 levels and p53/TP53-mediated apoptosis. Modulates proteasomal degradation of target proteins by the SCF (SKP2-CUL1-F-box protein) E3 ubiquitin-protein ligase complex. Also exhibits SUMO-specific isopeptidase activity, deconjugating SUMO1 from RANGAP1 and RGS17. The sequence is that of Adenosine 5'-monophosphoramidase HINT1 (HINT1) from Oryctolagus cuniculus (Rabbit).